A 391-amino-acid chain; its full sequence is Chaperone protein DnaJ (391 aa).

The 66-residue stretch at 2-67 (DYYDVLGVSK…QKRESYDRYG (66 aa)) folds into the J domain. The CR-type zinc-finger motif lies at 148-226 (GVEKELLVSG…CRGQGRVKDK (79 aa)). 8 residues coordinate Zn(2+): C161, C164, C178, C181, C200, C203, C214, and C217. 4 CXXCXGXG motif repeats span residues 161–168 (CTTCSGSG), 178–185 (CERCKGSG), 200–207 (CPECGGEG), and 214–221 (CSNCRGQG).

The protein belongs to the DnaJ family. Homodimer. Zn(2+) is required as a cofactor.

It localises to the cytoplasm. Functionally, participates actively in the response to hyperosmotic and heat shock by preventing the aggregation of stress-denatured proteins and by disaggregating proteins, also in an autonomous, DnaK-independent fashion. Unfolded proteins bind initially to DnaJ; upon interaction with the DnaJ-bound protein, DnaK hydrolyzes its bound ATP, resulting in the formation of a stable complex. GrpE releases ADP from DnaK; ATP binding to DnaK triggers the release of the substrate protein, thus completing the reaction cycle. Several rounds of ATP-dependent interactions between DnaJ, DnaK and GrpE are required for fully efficient folding. Also involved, together with DnaK and GrpE, in the DNA replication of plasmids through activation of initiation proteins. The chain is Chaperone protein DnaJ from Chlamydia felis (strain Fe/C-56) (Chlamydophila felis).